The sequence spans 614 residues: Adenylate kinase 7 (614 aa).

An adenylate kinase region spans residues 258–503; that stretch reads PIKICILGPP…KEIGKPRNYG (246 aa). ATP is bound at residue 268-273; sequence AVGKSS. Residues 288–346 are NMP; sequence KMKDVIAEAIAKLEAIVAPKDSVEGEEEGEEEEEEENVDDAQELLDGIKESMEQNAGRL. Residues 308-327 are disordered; that stretch reads DSVEGEEEGEEEEEEENVDD. Acidic residues predominate over residues 311–327; the sequence is EGEEEGEEEEEEENVDD. AMP contacts are provided by residues 323 to 346, 373 to 376, and Q380; these read ENVDDAQELLDGIKESMEQNAGRL and GFPK. The stretch at 376 to 568 forms a coiled coil; the sequence is KTYDQAKDLF…EERELLEVQS (193 aa). Residues 428-438 form an LID region; the sequence is NLPESVVAGTH. Residue R446 participates in AMP binding. G478 is an ATP binding site. Residues 570–614 are DPY-30; sequence PLRNYLMTYVMPTLMQGLNECCKVRPEDPVDFLAEYLFKNNPEMQ.

It in the central section; belongs to the adenylate kinase family. The protein in the C-terminal section; belongs to the dpy-30 family.

Its subcellular location is the cytoplasm. The protein localises to the cytosol. The protein resides in the cell projection. It is found in the cilium. It localises to the flagellum. It catalyses the reaction AMP + ATP = 2 ADP. The enzyme catalyses a 2'-deoxyribonucleoside 5'-diphosphate + ATP = a 2'-deoxyribonucleoside 5'-triphosphate + ADP. The catalysed reaction is a ribonucleoside 5'-diphosphate + ATP = a ribonucleoside 5'-triphosphate + ADP. Its function is as follows. Nucleoside monophosphate (NMP) kinase that catalyzes the reversible transfer of the terminal phosphate group between nucleoside triphosphates and monophosphates. Has highest activity toward AMP, and weaker activity toward dAMP, CMP and dCMP. Also displays broad nucleoside diphosphate kinase activity. Involved in maintaining ciliary structure and function. The protein is Adenylate kinase 7 (Ak7) of Mus musculus (Mouse).